A 666-amino-acid chain; its full sequence is Non-receptor tyrosine-protein kinase TNK1 (666 aa).

Ser96 is subject to Phosphoserine. The Protein kinase domain occupies 116-383 (VRRGELLGSG…LEGLLQEAWL (268 aa)). ATP-binding positions include 122-130 (LGSGCFGVV) and Lys148. The active-site Proton acceptor is the Asp245. Ser255 is subject to Phosphoserine. Residues 381–441 (AWLSEGRCVR…PASAVTLADL (61 aa)) enclose the SH3 domain. The interval 442–589 (GGSPVTHPAH…VPSGGPLSDP (148 aa)) is disordered. Residues 457–473 (HGEKCRGGTDGDREKAT) show a composition bias toward basic and acidic residues. Position 498 is a phosphoserine (Ser498). Thr510 carries the post-translational modification Phosphothreonine. Phosphoserine is present on Ser515. Residues 531–544 (DLPPRPPDLPPRPP) show a composition bias toward pro residues. Residue Ser582 is modified to Phosphoserine.

This sequence belongs to the protein kinase superfamily. Tyr protein kinase family. In terms of assembly, interacts with the SH3 domain of PLCG1 via its Pro-rich domain. Post-translationally, autophosphorylated on tyrosine residues. As to expression, expressed in whole embryo and all adult tissues examined including liver, kidney, heart, brain, skeletal muscle and intestine. Also detected in various myeloid- and lymphoid-derived cell lines.

The protein resides in the membrane. The protein localises to the cytoplasm. It carries out the reaction L-tyrosyl-[protein] + ATP = O-phospho-L-tyrosyl-[protein] + ADP + H(+). In terms of biological role, may function in signaling pathways utilized broadly during fetal development and more selectively in adult tissues and in cells of the lymphohematopoietic system. Could specifically be involved in phospholipid signal transduction. Involved in negative regulation of cell growth. Has tumor suppressor properties. Plays a negative regulatory role in the Ras-MAPK pathway. The protein is Non-receptor tyrosine-protein kinase TNK1 of Mus musculus (Mouse).